The sequence spans 234 residues: ATP synthase subunit a 1 (234 aa).

The next 6 membrane-spanning stretches (helical) occupy residues 29–49 (FLVH…VALL), 90–110 (LIAT…IPGF), 116–136 (NLNT…VVGV), 147–167 (FVGP…IGHL), 186–206 (IVLV…MMLM), and 207–227 (GILV…IYIA).

Belongs to the ATPase A chain family. As to quaternary structure, F-type ATPases have 2 components, CF(1) - the catalytic core - and CF(0) - the membrane proton channel. CF(1) has five subunits: alpha(3), beta(3), gamma(1), delta(1), epsilon(1). CF(0) has three main subunits: a(1), b(2) and c(9-12). The alpha and beta chains form an alternating ring which encloses part of the gamma chain. CF(1) is attached to CF(0) by a central stalk formed by the gamma and epsilon chains, while a peripheral stalk is formed by the delta and b chains.

It is found in the cell inner membrane. Its function is as follows. Key component of the proton channel; it plays a direct role in the translocation of protons across the membrane. The sequence is that of ATP synthase subunit a 1 from Syntrophotalea carbinolica (strain DSM 2380 / NBRC 103641 / GraBd1) (Pelobacter carbinolicus).